The primary structure comprises 576 residues: (+)-alpha-terpineol synthase (576 aa).

Residues arginine 286, aspartate 323, aspartate 327, arginine 466, and asparagine 469 each coordinate (2E)-geranyl diphosphate. Positions 323 and 327 each coordinate Mg(2+). The DDXXD motif motif lies at 323 to 327 (DDVYD). Asparagine 469, threonine 473, and glutamate 477 together coordinate Mg(2+).

Belongs to the terpene synthase family. Tpsb subfamily. The cofactor is Mg(2+). It depends on Mn(2+) as a cofactor.

The catalysed reaction is (2E)-geranyl diphosphate + H2O = (R)-alpha-terpineol + diphosphate. In terms of biological role, monoterpene synthase producing mainly (+)-alpha-terpineol (44%) and (-)-limonene (33.6%) and lower amounts of (E)-geraniol (5.9%), linalool (5.0%), myrcene (3.4%), (-)-alpha-pinene (3.3%), (+)-sabinene (3.0%) and alpha-terpinolene (1.6%). The polypeptide is (+)-alpha-terpineol synthase (Santalum album (White sandalwood)).